A 314-amino-acid chain; its full sequence is tRNA-cytidine(32) 2-sulfurtransferase (314 aa).

The PP-loop motif signature appears at 49-54 (SGGKDS). [4Fe-4S] cluster is bound by residues cysteine 124, cysteine 127, and cysteine 215.

The protein belongs to the TtcA family. In terms of assembly, homodimer. Mg(2+) is required as a cofactor. It depends on [4Fe-4S] cluster as a cofactor.

Its subcellular location is the cytoplasm. The enzyme catalyses cytidine(32) in tRNA + S-sulfanyl-L-cysteinyl-[cysteine desulfurase] + AH2 + ATP = 2-thiocytidine(32) in tRNA + L-cysteinyl-[cysteine desulfurase] + A + AMP + diphosphate + H(+). Its pathway is tRNA modification. Catalyzes the ATP-dependent 2-thiolation of cytidine in position 32 of tRNA, to form 2-thiocytidine (s(2)C32). The sulfur atoms are provided by the cysteine/cysteine desulfurase (IscS) system. This is tRNA-cytidine(32) 2-sulfurtransferase from Pasteurella multocida (strain Pm70).